Consider the following 355-residue polypeptide: Glucokinase (355 aa).

ATP is bound at residue 11 to 16 (GDIGGT).

Belongs to the bacterial glucokinase family.

It is found in the cytoplasm. It catalyses the reaction D-glucose + ATP = D-glucose 6-phosphate + ADP + H(+). The sequence is that of Glucokinase from Synechocystis sp. (strain ATCC 27184 / PCC 6803 / Kazusa).